We begin with the raw amino-acid sequence, 113 residues long: Large ribosomal subunit protein bL19 (113 aa).

Belongs to the bacterial ribosomal protein bL19 family.

In terms of biological role, this protein is located at the 30S-50S ribosomal subunit interface and may play a role in the structure and function of the aminoacyl-tRNA binding site. This chain is Large ribosomal subunit protein bL19, found in Mycobacterium leprae (strain Br4923).